Reading from the N-terminus, the 513-residue chain is Protein CYCLOPS (513 aa).

Residues 327–435 are disordered; the sequence is QIHGGTASGE…ERSRKMAEAK (109 aa). A compositionally biased stretch (low complexity) spans 334–347; it reads SGEPSQSESSAAAP. A compositionally biased stretch (polar residues) spans 359–381; it reads PSNSSQTLCDSSWKQVGESTQNR. Residues 384–396 show a composition bias toward basic and acidic residues; it reads GVREQIMDNLKDD. Short sequence motifs (nuclear localization signal) lie at residues 397–401 and 421–424; these read RKRKR and KKRR. A coiled-coil region spans residues 447–513; it reads MQAVMKRCEN…ERLLSETGKI (67 aa).

This sequence belongs to the CYCLOPS family.

The protein localises to the nucleus. In terms of biological role, involved symbiotic signaling. Required for root infection by symbiotic rhizobia, infection thread (IT) formation, and nodule development. Required for symbiosome formation (i.e. the release of the bacteria from the ITs) and subsequent symbiosome development. Involved in arbuscular mycorrhizal (AM) symbiosis. This Pisum sativum (Garden pea) protein is Protein CYCLOPS.